A 1935-amino-acid polypeptide reads, in one-letter code: Myosin-7 (1935 aa).

The Myosin N-terminal SH3-like domain maps to 32–81; it reads DLKKDVFVPDDKQEFVKAKIVSREGGKVTAETEYGKTVTVKEDQVMQQNP. The Myosin motor domain maps to 85 to 778; the sequence is DKIEDMAMLT…LLGLLEEMRD (694 aa). N6,N6,N6-trimethyllysine is present on Lys-129. 178 to 185 contacts ATP; sequence GESGAGKT. Thr-378 bears the Phosphothreonine mark. 2 actin-binding regions span residues 655-677 and 757-771; these read LNKL…IPNE and KFGH…GLLG. In terms of domain architecture, IQ spans 781–810; sequence LSRIITRIQAQSRGVLARMEYKKLLERRDS. The stretch at 839–1935 forms a coiled coil; that stretch reads LLKSAEREKE…DIGTKGLNEE (1097 aa). Phosphoserine is present on residues Ser-1137 and Ser-1269. Position 1282 is a phosphothreonine (Thr-1282). Residue Tyr-1308 is modified to Phosphotyrosine. Thr-1309 is subject to Phosphothreonine. The residue at position 1510 (Ser-1510) is a Phosphoserine. Thr-1513 bears the Phosphothreonine mark. The segment at 1907–1935 is disordered; it reads EERADIAESQVNKLRAKSRDIGTKGLNEE. Residues 1923-1935 show a composition bias toward basic and acidic residues; sequence KSRDIGTKGLNEE.

This sequence belongs to the TRAFAC class myosin-kinesin ATPase superfamily. Myosin family. Muscle myosin is a hexameric protein that consists of 2 heavy chain subunits (MHC), 2 alkali light chain subunits (MLC) and 2 regulatory light chain subunits (MLC-2). Interacts with ECPAS. Interacts (via C-terminus) with LRRC39. As to expression, both wild type and variant Gln-403 are detected in skeletal muscle (at protein level).

The protein resides in the cytoplasm. Its subcellular location is the myofibril. It localises to the sarcomere. In terms of biological role, myosins are actin-based motor molecules with ATPase activity essential for muscle contraction. Forms regular bipolar thick filaments that, together with actin thin filaments, constitute the fundamental contractile unit of skeletal and cardiac muscle. The polypeptide is Myosin-7 (MYH7) (Homo sapiens (Human)).